A 131-amino-acid chain; its full sequence is DNA-directed RNA polymerase subunit omega (131 aa).

Positions 78 to 131 (DEPEAEAVPALSSAPDAAQSDAMGDVQFDRMTEEDLLRGLEGLVPPAATDDDGE) are disordered. Residues 104 to 115 (QFDRMTEEDLLR) show a composition bias toward basic and acidic residues.

It belongs to the RNA polymerase subunit omega family. As to quaternary structure, the RNAP catalytic core consists of 2 alpha, 1 beta, 1 beta' and 1 omega subunit. When a sigma factor is associated with the core the holoenzyme is formed, which can initiate transcription.

It carries out the reaction RNA(n) + a ribonucleoside 5'-triphosphate = RNA(n+1) + diphosphate. In terms of biological role, promotes RNA polymerase assembly. Latches the N- and C-terminal regions of the beta' subunit thereby facilitating its interaction with the beta and alpha subunits. This Beijerinckia indica subsp. indica (strain ATCC 9039 / DSM 1715 / NCIMB 8712) protein is DNA-directed RNA polymerase subunit omega.